We begin with the raw amino-acid sequence, 252 residues long: Aliphatic sulfonates import ATP-binding protein SsuB 1 (252 aa).

Residues 6 to 234 (LQLHIAGKRF…PRDRQAHEAA (229 aa)) enclose the ABC transporter domain. 38–45 (GASGCGKS) lines the ATP pocket.

The protein belongs to the ABC transporter superfamily. Aliphatic sulfonates importer (TC 3.A.1.17.2) family. In terms of assembly, the complex is composed of two ATP-binding proteins (SsuB), two transmembrane proteins (SsuC) and a solute-binding protein (SsuA).

Its subcellular location is the cell inner membrane. The catalysed reaction is ATP + H2O + aliphatic sulfonate-[sulfonate-binding protein]Side 1 = ADP + phosphate + aliphatic sulfonateSide 2 + [sulfonate-binding protein]Side 1.. Functionally, part of the ABC transporter complex SsuABC involved in aliphatic sulfonates import. Responsible for energy coupling to the transport system. This is Aliphatic sulfonates import ATP-binding protein SsuB 1 from Xanthomonas axonopodis pv. citri (strain 306).